We begin with the raw amino-acid sequence, 329 residues long: Stimulator of interferon genes protein (329 aa).

Topologically, residues 1–4 (MACV) are cytoplasmic. The chain crosses the membrane as a helical span at residues 5-25 (LAIGSILFVWILGKGKYSGAQ). Residue Leu26 is a topological domain, lumenal. Residues 27-52 (IYRMATNFAISQGCCLVTCACELTEE) traverse the membrane as a helical segment. Residues 53-74 (IKHLHTRYNGHYWRALKASFNL) are Cytoplasmic-facing. A helical transmembrane segment spans residues 75–88 (SCAAFVTAILCYVF). Topologically, residues 89–98 (YEPKLMASLP) are lumenal. Residues 99–116 (LTIDITLTLLSWLFCWIL) form a helical membrane-spanning segment. Residues 117–329 (GIQGPTPATI…QQHSEEYSML (213 aa)) are Cytoplasmic-facing. The interval 135 to 325 (LNVAHGLAWS…KHIRQQHSEE (191 aa)) is cyclic dinucleotide-binding domain (CBD). 2',3'-cGAMP-binding residues include Ser144, Tyr149, Arg220, and Thr245. 3',3'-c-di-GMP is bound by residues Ser144, Tyr149, 220–223 (RVFK), and Thr245.

This sequence belongs to the STING family. As to quaternary structure, homodimer; forms a homodimer in absence of cyclic nucleotide (c-di-GMP or cGAMP). Homotetramer; in presence of cyclic nucleotide (c-di-GMP or cGAMP), forms tetramers and higher-order oligomers through side-by-side packing.

Its subcellular location is the endoplasmic reticulum membrane. It is found in the cytoplasm. The protein resides in the perinuclear region. The protein localises to the endoplasmic reticulum-Golgi intermediate compartment membrane. It localises to the golgi apparatus membrane. Its subcellular location is the cytoplasmic vesicle. It is found in the autophagosome membrane. It catalyses the reaction H(+)(in) = H(+)(out). Functionally, sensor of cytosolic DNA from bacteria and viruses that promotes autophagy. Acts by recognizing and binding cyclic GMP-AMP (cGAMP), a messenger produced by CGAS in response to DNA in the cytosol. Exhibits guanine base-specific ligand recognition: binds 3'-3'linked cGAMP, 2'-3' linked cGAMP and 3'-3' linked c-di-GMP with much greater affinity as compared to 3'-3' linked c-di-AMP. Following cGAMP-binding, promotes the formation of autophagosomes, leading to target cytosolic DNA for degradation by the lysosome. Promotes autophagy by acting as a proton channel that directs proton efflux from the Golgi to facilitate LC3 lipidation. Lacks the C-terminal tail (CTT) found in other vertebrate orthologs which is essential for interferon signaling. In Xenopus tropicalis (Western clawed frog), this protein is Stimulator of interferon genes protein.